We begin with the raw amino-acid sequence, 287 residues long: MKNPIKWAIIAVLLSTVVAKKIVGEGMADVSAIKHPEEVHPTNRDFLRSLIFSISMIFGCEIGDKTFIVAALLAFENSRLTVFAGSYSALFIMTLLGVLLGHAAPLLFPRKLTDILGGVLFVIFGIKMLMEAKEVMDSKESMSDEFQNVRNEIAANGPIDQLLEEGAAPSHYTGHRSRSGHTLMSQLKSKGRNVMATLFSPLFIKAFALTFVSEWGDRSQIATIAMAASDNVYGVFMGANVGHACCTALAVISGKYISTKIKVHKVMFIGGILFIAFGLVYFYQGFF.

7 helical membrane-spanning segments follow: residues 7–27 (WAII…GEGM), 50–70 (LIFS…FIVA), 89–109 (ALFI…LLFP), 112–132 (LTDI…LMEA), 194–214 (VMAT…FVSE), 232–252 (VYGV…LAVI), and 267–287 (MFIG…QGFF).

Belongs to the GDT1 family.

The protein resides in the membrane. The protein is GDT1-like protein C17G8.08c of Schizosaccharomyces pombe (strain 972 / ATCC 24843) (Fission yeast).